The following is a 406-amino-acid chain: Probable sphingosine-1-phosphate phosphatase (406 aa).

2 consecutive transmembrane segments (helical) span residues 66–86 and 92–112; these read ILGE…CVAT and LCVV…TFTL. Residues 107–115 are phosphatase sequence motif I; sequence KNTFTLPRP. The phosphatase sequence motif II stretch occupies residues 133–136; that stretch reads PSTH. His-136 functions as the Proton donor in the catalytic mechanism. Transmembrane regions (helical) follow at residues 138-158 and 162-182; these read ASAF…FPTI and FNIS…SVMF. The phosphatase sequence motif III stretch occupies residues 183-194; it reads SRLYNGHHTPMD. His-190 functions as the Nucleophile in the catalytic mechanism. 5 helical membrane passes run 193–213, 225–245, 254–274, 313–333, and 374–394; these read MDVI…TYQL, TFLF…FFHP, AYPE…SLWL, ILIG…FFFF, and LFVY…FYYL.

This sequence belongs to the type 2 lipid phosphate phosphatase family.

It localises to the endoplasmic reticulum membrane. Its function is as follows. Has enzymatic activity against both sphingosine 1 phosphate (S1P) and dihydro-S1P. Regulates intracellular and extracellular S1P levels. In Dictyostelium discoideum (Social amoeba), this protein is Probable sphingosine-1-phosphate phosphatase (sppA).